The chain runs to 115 residues: MKFVLLFGVLLVTLFSYSSAEMLDDFDQADEDELLSLIEKEEARAKECTPRFYDCSHDRHSCCRSELFKDVCTCFYPEGGDNEVCTCQQPKHLKYMEKAAGEAKKFGGKIKKWFG.

The N-terminal stretch at 1–20 (MKFVLLFGVLLVTLFSYSSA) is a signal peptide. Positions 21-44 (EMLDDFDQADEDELLSLIEKEEAR) are excised as a propeptide. 4 disulfide bridges follow: Cys-48/Cys-63, Cys-55/Cys-72, Cys-62/Cys-87, and Cys-74/Cys-85.

It belongs to the neurotoxin 19 (CSTX) family. 01 subfamily. As to expression, expressed by the venom gland.

The protein localises to the secreted. This chain is U3-lycotoxin-Ls1n, found in Lycosa singoriensis (Wolf spider).